The following is a 383-amino-acid chain: uncharacterized protein (383 aa).

2 helical membrane passes run 49–69 (VDLLAAVQASVEPAALIGCVA) and 347–367 (LLGGIPLAGFFAAGEIGPVAG).

It to M.tuberculosis Rv0874c.

The protein localises to the cell membrane. This is an uncharacterized protein from Mycobacterium tuberculosis (strain CDC 1551 / Oshkosh).